The following is a 199-amino-acid chain: Recombination protein RecR (199 aa).

The segment at 57-72 (CSVCGNLTDDDPCNIC) adopts a C4-type zinc-finger fold. The Toprim domain maps to 80 to 176 (STVLVVEDSK…TVTRLARGLA (97 aa)).

Belongs to the RecR family.

In terms of biological role, may play a role in DNA repair. It seems to be involved in an RecBC-independent recombinational process of DNA repair. It may act with RecF and RecO. In Streptococcus mutans serotype c (strain ATCC 700610 / UA159), this protein is Recombination protein RecR.